The primary structure comprises 34 residues: Potassium channel toxin alpha-KTx 6.17 (34 aa).

4 disulfides stabilise this stretch: C3-C24, C9-C29, C13-C31, and C19-C34.

The protein belongs to the short scorpion toxin superfamily. Potassium channel inhibitor family. Alpha-KTx 06 subfamily. Expressed by the venom gland.

The protein resides in the secreted. In terms of biological role, this toxin reversibly blocks Shaker B potassium-channels (expressed in insect Sf9 cells) with a Kd of 96.6 nM, and presents an even better affinity toward hKv1.3 (KCNA3), blocking it with a Kd of 17.7 nM. This Opisthacanthus cayaporum (South American scorpion) protein is Potassium channel toxin alpha-KTx 6.17.